Here is a 165-residue protein sequence, read N- to C-terminus: Transcriptional repressor NrdR (165 aa).

The segment at 3-34 (CPYCGQLNNRVVDSRLSRSEFAVRRRRECLDC) is a zinc-finger region. One can recognise an ATP-cone domain in the interval 49 to 139 (VMVVKKDGRR…VYREFKDVDD (91 aa)).

It belongs to the NrdR family. Zn(2+) serves as cofactor.

Negatively regulates transcription of bacterial ribonucleotide reductase nrd genes and operons by binding to NrdR-boxes. The chain is Transcriptional repressor NrdR from Desulforapulum autotrophicum (strain ATCC 43914 / DSM 3382 / VKM B-1955 / HRM2) (Desulfobacterium autotrophicum).